A 1204-amino-acid chain; its full sequence is MITLRKSLSKSCKDLRILNGTTYVKGFCSTTTTDTTTTTSTSTTTDTDTNSEKSNKEKLFHQINELTKQSSFNKVLFYKKSAHETEGYSYKERQQFKQKQQKIKQIKHNQQLKQKQQIEQQKQKKLEQQQQQQQLELEKKQKFEQQLEQQQREQNQISLLEKSKDLESINDFGDFDFRELETKPLFSVPNVLINYLENEKTLSDHQKSDVVGSFYSDGEIPSVPHINLEEYTRSVLIEAYLEVCKPEYAFYYFKQSENNKTNSKGLLLMIEFYIKIGDIDSAFKFFEVNFKDYKDLISTNDYYKLFNGLITYSIDNQENIFDIKNKFFNVIINDNINNDIEKFNVGSLASMIESITPKYQPPPQEQQLMDDDSNSNSNNDSNNIIKNSSSKLEFNDDCVSNYKKLVNFDQLYSIYKNNYKKYTSDQRLIILSCILKYSIITADIELFLNTVNRVLVKDGIEKVEIPILQILFEAYTHTIPSDKPELVGQLKYLLTNYIKDMDSSDNGYKSISKLIAYNFSFKGDIKNSIYDQLCGIGIKSIEIDIENNIENSVLINKLKQEQREKERNQFIIFIQSIFPEDRIQHFVETALIYLINDNSYQEAVKLYIYFLKEGSVTGIDIFLKYHELSYKNIVYNNNNNNNNNNNNNNNNNNNNNNNNNIKNFTTFSENDHKTLKTFWERIKNNYVNNNNKQQQQEERDIENEFIFIGKGEINNDQLLEKFQYIKEFRNIKSFFNSYEENLNPNDFINYIKNIINKVNDDDNDNDNNNNNNNNNNNNNDDDDGGGHGGGDVFKTTTPKKVKPLISTIQKSQNELPTTTTYKEIIENTSFFRNQQYNFNRELSSTLNSPKSRLDLERLQSFLNCKSHTESMSFQQLCICLELVGDTGFKYDFYKNLNHIQKTLIITPQLCKNLFSTVTMDESIDILRRGLSRISPENLKSLGIWDGVFQGLLKDPLKTPLANFLMYNGFISKSSFDRYSYCQQIINTDIDAYYFFLDPSISYYDTFGGDIEDASNYNLKKDSSKTFFKPMEDFFITYLDTFFKASSPHEISQRPDYQTQFSNYTILSLIRLGKLNEAFKEIESLSPAKYNATTIGLVVFIYSKRYKQDKSKFLVEIQSLIQRIIFDLENKMGSEDARSYFHKYILKSLIINYGNIEMDNLIANVDVPKVLKDIDNSLAPNFDRRLIRKLFKVRGYIKYRFYRLN.

A compositionally biased stretch (low complexity) spans 32–48 (TTDTTTTTSTSTTTDTD). A disordered region spans residues 32 to 55 (TTDTTTTTSTSTTTDTDTNSEKSN). 3 TPR repeats span residues 263–296 (SKGL…YKDL), 379–412 (NDSN…DQLY), and 583–617 (IQHF…GSVT). The disordered stretch occupies residues 360-387 (QPPPQEQQLMDDDSNSNSNNDSNNIIKN). The segment covering 374 to 387 (NSNSNNDSNNIIKN) has biased composition (low complexity). Disordered regions lie at residues 639-660 (NNNN…NNNN) and 761-797 (DDND…KTTT). Residues 766-778 (DNNNNNNNNNNNN) show a composition bias toward low complexity.

This chain is TPR repeat-containing protein DDB_G0287999, found in Dictyostelium discoideum (Social amoeba).